Consider the following 295-residue polypeptide: Sulfotransferase 1 family member D1 (295 aa).

K48–W53 serves as a coordination point for 3'-phosphoadenylyl sulfate. Substrate contacts are provided by residues F81 and K106–H108. H108 acts as the Proton acceptor in catalysis. Residues R130 and S138 each contribute to the 3'-phosphoadenylyl sulfate site. F142 is a substrate binding site. 3'-phosphoadenylyl sulfate-binding positions include Y193, S227 to M232, and R257 to G259.

The protein belongs to the sulfotransferase 1 family. Detected in kidney and liver. Detected in kidney collecting duct cells.

It is found in the cytoplasm. In terms of biological role, sulfotransferase with broad substrate specificity that utilizes 3'-phospho-5'-adenylyl sulfate (PAPS) as sulfonate donor to catalyze the sulfate conjugation of catecholamines, such as dopamine, prostaglandins, leukotriene E4, drugs and xenobiotic compounds. Has sulfotransferase activity towards p-nitrophenol, 2-naphthylamine and minoxidil (in vitro). Sulfonation increases the water solubility of most compounds, and therefore their renal excretion, but it can also result in bioactivation to form active metabolites. This is Sulfotransferase 1 family member D1 (Sult1d1) from Mus musculus (Mouse).